We begin with the raw amino-acid sequence, 539 residues long: CTP synthase (539 aa).

Positions 1–268 (MSFKSIFLTG…SDFLLNKLGF (268 aa)) are amidoligase domain. Serine 14 provides a ligand contact to CTP. Residue serine 14 coordinates UTP. An ATP-binding site is contributed by 15–20 (SLGKGL). Tyrosine 55 serves as a coordination point for L-glutamine. Position 72 (aspartate 72) interacts with ATP. Residues aspartate 72 and glutamate 142 each contribute to the Mg(2+) site. CTP-binding positions include 149–151 (DIE), 188–193 (KTKPTQ), and lysine 224. Residues 188–193 (KTKPTQ) and lysine 224 contribute to the UTP site. The Glutamine amidotransferase type-1 domain occupies 294–532 (RIGLVGKYLE…IRAAKAYSLE (239 aa)). Position 353 (glycine 353) interacts with L-glutamine. Cysteine 380 (nucleophile; for glutamine hydrolysis) is an active-site residue. L-glutamine-binding positions include 381-384 (LGMQ), glutamate 404, and arginine 460. Residues histidine 505 and glutamate 507 contribute to the active site.

It belongs to the CTP synthase family. In terms of assembly, homotetramer.

The enzyme catalyses UTP + L-glutamine + ATP + H2O = CTP + L-glutamate + ADP + phosphate + 2 H(+). It carries out the reaction L-glutamine + H2O = L-glutamate + NH4(+). The catalysed reaction is UTP + NH4(+) + ATP = CTP + ADP + phosphate + 2 H(+). It functions in the pathway pyrimidine metabolism; CTP biosynthesis via de novo pathway; CTP from UDP: step 2/2. With respect to regulation, allosterically activated by GTP, when glutamine is the substrate; GTP has no effect on the reaction when ammonia is the substrate. The allosteric effector GTP functions by stabilizing the protein conformation that binds the tetrahedral intermediate(s) formed during glutamine hydrolysis. Inhibited by the product CTP, via allosteric rather than competitive inhibition. Catalyzes the ATP-dependent amination of UTP to CTP with either L-glutamine or ammonia as the source of nitrogen. Regulates intracellular CTP levels through interactions with the four ribonucleotide triphosphates. The protein is CTP synthase of Chlamydia trachomatis serovar A (strain ATCC VR-571B / DSM 19440 / HAR-13).